Reading from the N-terminus, the 213-residue chain is Orotate phosphoribosyltransferase (213 aa).

Residue lysine 26 participates in 5-phospho-alpha-D-ribose 1-diphosphate binding. Position 34 to 35 (34 to 35 (FF)) interacts with orotate. Residues 72-73 (YK), arginine 99, lysine 100, lysine 103, histidine 105, and 124-132 (DDVITAGTA) contribute to the 5-phospho-alpha-D-ribose 1-diphosphate site. 2 residues coordinate orotate: threonine 128 and arginine 156.

Belongs to the purine/pyrimidine phosphoribosyltransferase family. PyrE subfamily. As to quaternary structure, homodimer. Mg(2+) serves as cofactor.

It carries out the reaction orotidine 5'-phosphate + diphosphate = orotate + 5-phospho-alpha-D-ribose 1-diphosphate. It functions in the pathway pyrimidine metabolism; UMP biosynthesis via de novo pathway; UMP from orotate: step 1/2. Catalyzes the transfer of a ribosyl phosphate group from 5-phosphoribose 1-diphosphate to orotate, leading to the formation of orotidine monophosphate (OMP). The sequence is that of Orotate phosphoribosyltransferase from Alteromonas mediterranea (strain DSM 17117 / CIP 110805 / LMG 28347 / Deep ecotype).